A 515-amino-acid chain; its full sequence is 3,4-dehydroadipyl-CoA semialdehyde dehydrogenase (515 aa).

Residues glutamate 255 and cysteine 294 contribute to the active site. The interval 470–515 is disordered; the sequence is VMPTCLHGGPRARRRRRGVGRSARAGDVSPPLRRAGRPRGAGSPVA. Over residues 479 to 488 the composition is skewed to basic residues; sequence PRARRRRRGV. Low complexity predominate over residues 489–515; it reads GRSARAGDVSPPLRRAGRPRGAGSPVA.

This sequence belongs to the aldehyde dehydrogenase family. Homodimer.

It carries out the reaction (3Z)-6-oxohex-3-enoyl-CoA + NADP(+) + H2O = cis-3,4-dehydroadipyl-CoA + NADPH + 2 H(+). In terms of biological role, catalyzes the NADP-dependent oxidation of 3,4-dehydroadipyl-CoA semialdehyde to form cis-3,4-dehydroadipyl-CoA. The chain is 3,4-dehydroadipyl-CoA semialdehyde dehydrogenase (boxD) from Aromatoleum evansii (Azoarcus evansii).